Here is a 130-residue protein sequence, read N- to C-terminus: Small ribosomal subunit protein uS9 (130 aa).

The protein belongs to the universal ribosomal protein uS9 family.

The polypeptide is Small ribosomal subunit protein uS9 (Shigella sonnei (strain Ss046)).